The chain runs to 160 residues: Cyclic pyranopterin monophosphate synthase (160 aa).

Substrate-binding positions include 75-77 and 116-117; these read MCH and ME. D131 is an active-site residue.

This sequence belongs to the MoaC family. Homohexamer; trimer of dimers.

It catalyses the reaction (8S)-3',8-cyclo-7,8-dihydroguanosine 5'-triphosphate = cyclic pyranopterin phosphate + diphosphate. Its pathway is cofactor biosynthesis; molybdopterin biosynthesis. Functionally, catalyzes the conversion of (8S)-3',8-cyclo-7,8-dihydroguanosine 5'-triphosphate to cyclic pyranopterin monophosphate (cPMP). The protein is Cyclic pyranopterin monophosphate synthase of Staphylococcus haemolyticus (strain JCSC1435).